The chain runs to 1305 residues: ABC transporter FPSE_09185 (1305 aa).

N28 is a glycosylation site (N-linked (GlcNAc...) asparagine). 6 helical membrane-spanning segments follow: residues 44 to 64, 99 to 119, 172 to 192, 199 to 219, 277 to 297, and 312 to 332; these read FCVY…MPLM, LYIV…KFCF, RLGT…VAFT, IVSA…VPIY, IIGA…GLAF, and VGVV…FSYL. One can recognise an ABC transmembrane type-1 1 domain in the interval 48–348; sequence VVGALASIGV…ISQAMVAATE (301 aa). The ABC transporter 1 domain occupies 372-663; the sequence is LIFKDVTFEY…ENGVYYSLVE (292 aa). Position 407–414 (407–414) interacts with ATP; that stretch reads GPSGSGKS. The interval 434–454 is disordered; that stretch reads EAATPRSSKEGERDNHDERKY. Residues 440–454 show a composition bias toward basic and acidic residues; the sequence is SSKEGERDNHDERKY. N-linked (GlcNAc...) asparagine glycans are attached at residues N468, N507, and N525. 6 consecutive transmembrane segments (helical) span residues 737 to 757, 780 to 800, 851 to 873, 877 to 899, 964 to 984, and 999 to 1019; these read FLLI…QAWL, GFMW…QCWI, GVFG…CLII, FGWK…SGFW, AVIF…ILWY, and FMVS…ILGV. In terms of domain architecture, ABC transmembrane type-1 2 spans 738–1025; it reads LLITIASMGV…ILGVAPSAAQ (288 aa). The interval 1038-1057 is disordered; sequence DSNRSSQEAEKSGPTVEDTD. Residues N1040, N1066, and N1075 are each glycosylated (N-linked (GlcNAc...) asparagine). Residues 1062–1300 form the ABC transporter 2 domain; sequence IELCNVSFKY…RGIYWDMCQT (239 aa). 1096-1103 is an ATP binding site; the sequence is GPSGCGKT. A glycan (N-linked (GlcNAc...) asparagine) is linked at N1125.

This sequence belongs to the ABC transporter superfamily. ABCB family. Multidrug resistance exporter (TC 3.A.1.201) subfamily.

The protein localises to the membrane. Its function is as follows. ABC transporter; part of the gene cluster that mediates the biosynthesis of the lipopeptides W493 A and B. W493 A and B consist of six amino acid residues D-allo-thr, L-Ala, D-Ala, L-Gln, D-Tyr, and L-Val/L-Ile linked to a 3-hydroxy-4-methyltetradecanoic acid polyketide chain. May be involved in excretion or internal transport of W493 A and B. In Fusarium pseudograminearum (strain CS3096) (Wheat and barley crown-rot fungus), this protein is ABC transporter FPSE_09185.